Here is a 704-residue protein sequence, read N- to C-terminus: Preterpestacin I synthase tpcA (704 aa).

The terpene cyclase stretch occupies residues 1-329 (MEQLSYQSKL…CSACPRQNAW (329 aa)). D96 is a binding site for Mg(2+). Residues D96, N231, 235–239 (SWERE), and 325–326 (RQ) each bind substrate. The DDXXD 1 motif lies at 96 to 100 (DDGGE). The short motif at 231-239 (NDYFSWERE) is the NSE/DTE element. The prenyltransferase stretch occupies residues 330 to 688 (KDMSSQSLNG…MLRLCLAKLS (359 aa)). Residues 361–380 (KDSSFFGSQPSDDEPSLSEV) are disordered. Positions 406, 409, and 438 each coordinate isopentenyl diphosphate. Mg(2+) contacts are provided by D445 and D449. Positions 445–449 (DDLED) match the DDXXD 2 motif. Dimethylallyl diphosphate is bound at residue R454. R455 serves as a coordination point for isopentenyl diphosphate. Residues K532, T533, Q568, N575, K583, and K593 each contribute to the dimethylallyl diphosphate site.

The protein in the N-terminal section; belongs to the terpene synthase family. In the C-terminal section; belongs to the FPP/GGPP synthase family. As to quaternary structure, hexamer. Mg(2+) serves as cofactor.

The catalysed reaction is isopentenyl diphosphate + (2E,6E)-farnesyl diphosphate = (2E,6E,10E)-geranylgeranyl diphosphate + diphosphate. It catalyses the reaction isopentenyl diphosphate + (2E,6E,10E)-geranylgeranyl diphosphate = (2E,6E,10E,14E)-geranylfarnesyl diphosphate + diphosphate. The protein operates within secondary metabolite biosynthesis; terpenoid biosynthesis. Bifunctional terpene synthase; part of the gene cluster that mediates the biosynthesis of terpestacin. The bifunctional terpene synthase tpcA converts isopentenyl diphosphate (IPP) and dimethylallyl diphosphate (DMAPP) into the sesterterpene preterpestacin I. The C-terminal prenyltransferase (PT) domain of tpcA catalyzes formation of GFPP, whereas the N-terminal terpene cyclase (TC) domain catalyzes the cyclization of GFPP into preterpestacin I. The cytochrome P450 monooxygenase tpcB then hydroxylates preterpestacin I to yield 24-hydroxypreterpstacin I (renamed as preterpestacin II) whereas the cytochrome P450 monooxygenase tpcC further hydroxylates preterpestacin II to yield 16,17-dihydroxypreterpestacin II (renamed as preterpestacin III). Finally, the FAD-dependent monooxygenase tpcD converts preterpestacin III into terpestacin. The polypeptide is Preterpestacin I synthase tpcA (Cochliobolus heterostrophus (strain C5 / ATCC 48332 / race O) (Southern corn leaf blight fungus)).